A 382-amino-acid polypeptide reads, in one-letter code: 1-deoxy-D-xylulose 5-phosphate reductoisomerase (382 aa).

NADPH is bound by residues T10, G11, S12, I13, G36, and N122. K123 is a binding site for 1-deoxy-D-xylulose 5-phosphate. E124 is a binding site for NADPH. Residue D148 participates in Mn(2+) binding. 1-deoxy-D-xylulose 5-phosphate contacts are provided by S149, E150, S174, and H197. E150 lines the Mn(2+) pocket. G203 provides a ligand contact to NADPH. 1-deoxy-D-xylulose 5-phosphate is bound by residues S210, N215, K216, and E219. Position 219 (E219) interacts with Mn(2+).

The protein belongs to the DXR family. Mg(2+) is required as a cofactor. It depends on Mn(2+) as a cofactor.

The enzyme catalyses 2-C-methyl-D-erythritol 4-phosphate + NADP(+) = 1-deoxy-D-xylulose 5-phosphate + NADPH + H(+). It functions in the pathway isoprenoid biosynthesis; isopentenyl diphosphate biosynthesis via DXP pathway; isopentenyl diphosphate from 1-deoxy-D-xylulose 5-phosphate: step 1/6. Catalyzes the NADPH-dependent rearrangement and reduction of 1-deoxy-D-xylulose-5-phosphate (DXP) to 2-C-methyl-D-erythritol 4-phosphate (MEP). The sequence is that of 1-deoxy-D-xylulose 5-phosphate reductoisomerase from Chlorobaculum tepidum (strain ATCC 49652 / DSM 12025 / NBRC 103806 / TLS) (Chlorobium tepidum).